Reading from the N-terminus, the 114-residue chain is Large ribosomal subunit protein bL20c (114 aa).

It belongs to the bacterial ribosomal protein bL20 family.

The protein resides in the plastid. The protein localises to the chloroplast. In terms of biological role, binds directly to 23S ribosomal RNA and is necessary for the in vitro assembly process of the 50S ribosomal subunit. It is not involved in the protein synthesizing functions of that subunit. This chain is Large ribosomal subunit protein bL20c (rpl20), found in Guillardia theta (Cryptophyte).